The sequence spans 360 residues: Peptide chain release factor 1 (360 aa).

Gln237 carries the post-translational modification N5-methylglutamine.

The protein belongs to the prokaryotic/mitochondrial release factor family. Post-translationally, methylated by PrmC. Methylation increases the termination efficiency of RF1.

It is found in the cytoplasm. Its function is as follows. Peptide chain release factor 1 directs the termination of translation in response to the peptide chain termination codons UAG and UAA. This Pseudomonas savastanoi pv. phaseolicola (strain 1448A / Race 6) (Pseudomonas syringae pv. phaseolicola (strain 1448A / Race 6)) protein is Peptide chain release factor 1.